The primary structure comprises 603 residues: Probable HECT-type ubiquitin ligase-interacting protein creD (603 aa).

Disordered stretches follow at residues 375-398 and 432-499; these read ELDP…GTLS and LNIT…MATP. Basic and acidic residues predominate over residues 443 to 455; sequence TDHESQNDSEHRR. Over residues 465 to 481 the composition is skewed to low complexity; sequence PSSGSNSHSPSSPVLSR. The segment covering 482–492 has biased composition (basic and acidic residues); sequence RPSDEVDHEHV.

It belongs to the arrestin family. Interacts with hulA.

Functionally, component of the regulatory network controlling carbon source utilization through ubiquitination and deubiquitination involving creA, creB, creC, creD and acrB. May be involved in signaling by recognizing appropriately phosphorylated substrates via its arrestin domains and then recruit a HECT-type ubiquitin ligase such as hulA, leading to ubiquitination of the substrate, providing a link between ubiquitination and phosphorylation in protein regulation and stability. The sequence is that of Probable HECT-type ubiquitin ligase-interacting protein creD (creD) from Aspergillus flavus (strain ATCC 200026 / FGSC A1120 / IAM 13836 / NRRL 3357 / JCM 12722 / SRRC 167).